Reading from the N-terminus, the 963-residue chain is Copalyl diphosphate synthase (963 aa).

Positions 1–539 are type II terpene cyclase (TC); sequence MSPMDLQESA…EAYILAALKR (539 aa). Residues 227 to 292 are substrate binding; it reads ATQWDDECED…FIEKIRSYLH (66 aa). Positions 311 and 314 each coordinate Mg(2+). Positions 311–314 match the DXDD motif; it reads DADD. Residues 333–341 carry the NSE/DTE motif; sequence AMLKEFEEE. Residues 337 to 341 and 521 to 522 contribute to the substrate site; these read EFEEE and VT. A linker region spans residues 540–659; it reads AADLPDENAE…SVSVHTDHSD (120 aa). Residues 627–648 show a composition bias toward polar residues; sequence TNGHYVNGTNHETPLTNGISNG. The disordered stretch occupies residues 627 to 657; sequence TNGHYVNGTNHETPLTNGISNGDSVSVHTDH. The interval 660–963 is geranylfarnesyl diphosphate synthase (PT); that stretch reads SYYQRSDWTA…KILARMSLEL (304 aa). Isopentenyl diphosphate is bound by residues Lys-688, Arg-691, and His-720. Mg(2+)-binding residues include Asp-727 and Asp-731. Positions 727–731 match the DDXXD 1 motif; it reads DDIQD. Arg-736 is a binding site for dimethylallyl diphosphate. Residue Arg-737 coordinates isopentenyl diphosphate. Lys-814, Thr-815, Gln-848, Asn-855, Lys-865, and Lys-875 together coordinate dimethylallyl diphosphate. Residues 851-855 carry the DDXXD 2 motif; that stretch reads DDYLN.

The protein in the N-terminal section; belongs to the terpene synthase family. This sequence in the C-terminal section; belongs to the FPP/GGPP synthase family. As to quaternary structure, homohexamer. Mg(2+) is required as a cofactor.

The enzyme catalyses isopentenyl diphosphate + (2E,6E)-farnesyl diphosphate = (2E,6E,10E)-geranylgeranyl diphosphate + diphosphate. It catalyses the reaction (2E,6E,10E)-geranylgeranyl diphosphate = (+)-copalyl diphosphate. Its function is as follows. Bifunctional terpene synthase that possesses both prenyltransferase and type II terpene cyclase activity, converting isopentenyl diphosphate (IPP) and dimethylallyl diphosphate (DMAPP) into geranylgeranyl diphosphate (GGPP) and further converting GGPP into copalyl diphosphate, respectively. The polypeptide is Copalyl diphosphate synthase (Talaromyces verruculosus (Penicillium verruculosum)).